The chain runs to 624 residues: Chaperone protein HtpG (624 aa).

The tract at residues 1–336 is a; substrate-binding; it reads MKGQETRGFQ…SNDLPLNVSR (336 aa). The b stretch occupies residues 337–552; sequence EILQDSTVTR…ADEMGTQMAK (216 aa). Positions 553–624 are c; sequence LFAAAGQAMP…IKRVNALLLG (72 aa).

The protein belongs to the heat shock protein 90 family. Homodimer.

Its subcellular location is the cytoplasm. Its function is as follows. Molecular chaperone. Has ATPase activity. In Enterobacter sp. (strain 638), this protein is Chaperone protein HtpG.